Reading from the N-terminus, the 244-residue chain is MKGKFSIALMLSACFSASASDSVHWGYEGSGDPAHWGKLSPDFSLCETGKNQSPVNIQQALNAQHDPLQLAFQSGTQQIINNGHTVQVNVSSGNTLLLDNETFALQQFHFHAPSENEIDGKQFPLEGHFVYKNADGALTVIALMFQEGAANPQLATAWQQIPAHVDQAEDVRTPIAIQALLPTSLNYYRFSGSLTTPPCSEGIRWLVLDHPVTASAEQINQFSSVMHHANNRPIQPLNGRIIIH.

An N-terminal signal peptide occupies residues 1-19 (MKGKFSIALMLSACFSASA). The Alpha-carbonic anhydrase domain occupies 23-244 (VHWGYEGSGD…QPLNGRIIIH (222 aa)). A disulfide bridge connects residues Cys-46 and Cys-199. His-84 serves as the catalytic Proton acceptor. Positions 109, 111, and 128 each coordinate Zn(2+). 195 to 196 (TT) lines the substrate pocket.

The protein belongs to the alpha-carbonic anhydrase family. The cofactor is Zn(2+).

It is found in the periplasm. The catalysed reaction is hydrogencarbonate + H(+) = CO2 + H2O. Its function is as follows. Reversible hydration of carbon dioxide. In Pectobacterium atrosepticum (strain SCRI 1043 / ATCC BAA-672) (Erwinia carotovora subsp. atroseptica), this protein is Carbonic anhydrase (cah).